The primary structure comprises 356 residues: MDKEKLDVKIEYCNYAMDSSVENMYVNKVWVQCENENCLKWRLLSSEDSAKVDHDEPWYCFMNTDSRYNNCSISEEDFPEESQLHQCGFKIVYSQLPLGSLVLVKLQNWPSWPGILCPDRFKGKYVTYDPDGNVEEYHIEFLGDPHSRSWIKATFVGHYSITLKPEKCKNKKKWYKSALQEACLLYGYSHEQRLEMCCLSKLQDKSETHDKVAALVKKRKQTSKNNIEKKKPKFRKRKRKAILKCSFENVYSDDALSKENRVVCETEVLLKELEQMLQQALQPTATPDESEEGHGEEINMGEKLSKCSPEAPAGSLFENHYEEDYLVIDGIKLKAGECIEDITNKFKEIDALMSEF.

The CW-type zinc-finger motif lies at 24 to 79 (MYVNKVWVQCENENCLKWRLLSSEDSAKVDHDEPWYCFMNTDSRYNNCSISEEDFP). The Zn(2+) site is built by cysteine 33, cysteine 38, cysteine 60, and cysteine 71. Residues 98-162 (LGSLVLVKLQ…ATFVGHYSIT (65 aa)) enclose the PWWP domain. The disordered stretch occupies residues 279-307 (QALQPTATPDESEEGHGEEINMGEKLSKC).

Functionally, histone methylation reader which binds to non-methylated (H3K4me0), monomethylated (H3K4me1), dimethylated (H3K4me2) and trimethylated (H3K4me3) 'Lys-4' on histone H3. The order of binding preference is H3K4me3 &gt; H3K4me2 &gt; H3K4me1 &gt; H3K4me0. The sequence is that of Zinc finger CW-type PWWP domain protein 2 (ZCWPW2) from Homo sapiens (Human).